Here is a 184-residue protein sequence, read N- to C-terminus: MTYQQAGRVAVIKRIAGWLVFIPALLSTLISIINFVYLYSQKGTGVNAVMLDFIHVMTDMARFNTPFLNIFWYNSPVPNLEQGLSAGNIMFFIIYMLIFVGLSLQASGARMSRQVRHIREGIEDQMILERAKGNEGHSREQLEEKIVLPHHTIFLQFFTLYILPSVIGVLGYFVIKLLGIMIQG.

Transmembrane regions (helical) follow at residues 15 to 35 (IAGW…IINF), 84 to 104 (LSAG…GLSL), and 162 to 182 (ILPS…GIMI).

It to E.coli YniB.

Its subcellular location is the cell membrane. Putative regulator of YfeABCD, an ABC transporter locus involved in inorganic iron transport. The sequence is that of Putative YfeABCD regulator YfeE (yfeE) from Yersinia pestis.